The following is a 425-amino-acid chain: Kynurenine/alpha-aminoadipate aminotransferase, mitochondrial (425 aa).

Residues 1–29 (MNYSRFLTATSLARKPSPIRTTADILSKA) constitute a mitochondrion transit peptide. Arg20 provides a ligand contact to substrate. Residue Ser40 is modified to Phosphoserine. Lys69 carries the post-translational modification N6-acetyllysine. Substrate is bound at residue Tyr74. Lys172 carries the N6-succinyllysine modification. An N6-acetyllysine modification is found at Lys179. Asn202 contacts substrate. At Lys263 the chain carries N6-(pyridoxal phosphate)lysine; alternate. 2 positions are modified to N6-acetyllysine; alternate: Lys263 and Lys339. N6-succinyllysine; alternate is present on residues Lys263 and Lys339. Position 351 is an N6-acetyllysine (Lys351). Lys367 carries the N6-acetyllysine; alternate modification. An N6-succinyllysine; alternate modification is found at Lys367. Residue Arg399 coordinates substrate. Position 422 is an N6-acetyllysine (Lys422).

This sequence belongs to the class-I pyridoxal-phosphate-dependent aminotransferase family. Homodimer. Pyridoxal 5'-phosphate serves as cofactor. Expressed mainly in kidney and to a lesser amount in liver and brain.

The protein resides in the mitochondrion. It catalyses the reaction L-kynurenine + 2-oxoglutarate = kynurenate + L-glutamate + H2O. The enzyme catalyses L-2-aminoadipate + 2-oxoglutarate = 2-oxoadipate + L-glutamate. The catalysed reaction is glycine + 2-oxoglutarate = glyoxylate + L-glutamate. It carries out the reaction L-kynurenine + glyoxylate = kynurenate + glycine + H2O. It catalyses the reaction 3-hydroxy-L-kynurenine + glyoxylate = xanthurenate + glycine + H2O. The enzyme catalyses 2-oxohexanoate + L-kynurenine = L-2-aminohexanoate + kynurenate + H2O. The catalysed reaction is 3-phenylpyruvate + L-kynurenine = kynurenate + L-phenylalanine + H2O. It carries out the reaction 4-methylsulfanyl-2-oxobutanoate + L-kynurenine = kynurenate + L-methionine + H2O. It catalyses the reaction 2-oxo-3-sulfanylpropanoate + L-kynurenine = kynurenate + L-cysteine + H2O. The enzyme catalyses indole-3-pyruvate + L-kynurenine = kynurenate + L-tryptophan + H2O. The catalysed reaction is 2-oxopentanoate + L-kynurenine = L-2-aminopentanoate + kynurenate + H2O. It carries out the reaction 4-methyl-2-oxopentanoate + L-kynurenine = kynurenate + L-leucine + H2O. It catalyses the reaction glyoxylate + L-methionine = 4-methylsulfanyl-2-oxobutanoate + glycine. The enzyme catalyses L-2-aminoadipate + glyoxylate = 2-oxoadipate + glycine. The catalysed reaction is L-tyrosine + glyoxylate = 3-(4-hydroxyphenyl)pyruvate + glycine. It carries out the reaction glyoxylate + L-phenylalanine = 3-phenylpyruvate + glycine. It catalyses the reaction L-tryptophan + glyoxylate = indole-3-pyruvate + glycine. The enzyme catalyses L-leucine + glyoxylate = 4-methyl-2-oxopentanoate + glycine. The catalysed reaction is 2-oxobutanoate + L-kynurenine = (2S)-2-aminobutanoate + kynurenate + H2O. It carries out the reaction 2-oxoadipate + L-kynurenine = L-2-aminoadipate + kynurenate + H2O. The protein operates within amino-acid degradation; L-lysine degradation via saccharopine pathway; glutaryl-CoA from L-lysine: step 4/6. In terms of biological role, transaminase with broad substrate specificity. Has transaminase activity towards aminoadipate, kynurenine, methionine and glutamate. Shows activity also towards tryptophan, aspartate and hydroxykynurenine. Accepts a variety of oxo-acids as amino-group acceptors, with a preference for 2-oxoglutarate, 2-oxocaproic acid, phenylpyruvate and alpha-oxo-gamma-methiol butyric acid. Can also use glyoxylate as amino-group acceptor (in vitro). This Mus musculus (Mouse) protein is Kynurenine/alpha-aminoadipate aminotransferase, mitochondrial.